The following is a 357-amino-acid chain: Histidinol-phosphate aminotransferase (357 aa).

N6-(pyridoxal phosphate)lysine is present on Lys222.

The protein belongs to the class-II pyridoxal-phosphate-dependent aminotransferase family. Histidinol-phosphate aminotransferase subfamily. Homodimer. Pyridoxal 5'-phosphate serves as cofactor.

It carries out the reaction L-histidinol phosphate + 2-oxoglutarate = 3-(imidazol-4-yl)-2-oxopropyl phosphate + L-glutamate. The protein operates within amino-acid biosynthesis; L-histidine biosynthesis; L-histidine from 5-phospho-alpha-D-ribose 1-diphosphate: step 7/9. This Leuconostoc mesenteroides subsp. mesenteroides (strain ATCC 8293 / DSM 20343 / BCRC 11652 / CCM 1803 / JCM 6124 / NCDO 523 / NBRC 100496 / NCIMB 8023 / NCTC 12954 / NRRL B-1118 / 37Y) protein is Histidinol-phosphate aminotransferase.